A 284-amino-acid polypeptide reads, in one-letter code: Acetyl-coenzyme A carboxylase carboxyl transferase subunit beta (284 aa).

In terms of domain architecture, CoA carboxyltransferase N-terminal spans 31–284 (FWTYCKGCDS…LYQILAMHKK (254 aa)). C35, C38, C54, and C57 together coordinate Zn(2+). The C4-type zinc-finger motif lies at 35–57 (CKGCDSHVFRKDIEENSFVCPKC).

It belongs to the AccD/PCCB family. As to quaternary structure, acetyl-CoA carboxylase is a heterohexamer composed of biotin carboxyl carrier protein (AccB), biotin carboxylase (AccC) and two subunits each of ACCase subunit alpha (AccA) and ACCase subunit beta (AccD). The cofactor is Zn(2+).

The protein resides in the cytoplasm. It catalyses the reaction N(6)-carboxybiotinyl-L-lysyl-[protein] + acetyl-CoA = N(6)-biotinyl-L-lysyl-[protein] + malonyl-CoA. It functions in the pathway lipid metabolism; malonyl-CoA biosynthesis; malonyl-CoA from acetyl-CoA: step 1/1. Component of the acetyl coenzyme A carboxylase (ACC) complex. Biotin carboxylase (BC) catalyzes the carboxylation of biotin on its carrier protein (BCCP) and then the CO(2) group is transferred by the transcarboxylase to acetyl-CoA to form malonyl-CoA. The protein is Acetyl-coenzyme A carboxylase carboxyl transferase subunit beta of Clostridioides difficile (strain 630) (Peptoclostridium difficile).